Consider the following 149-residue polypeptide: UPF0306 protein PM1958 (149 aa).

This sequence belongs to the UPF0306 family.

This chain is UPF0306 protein PM1958, found in Pasteurella multocida (strain Pm70).